Here is a 235-residue protein sequence, read N- to C-terminus: Mediator of RNA polymerase II transcription subunit 29 (235 aa).

The segment covering 1 to 14 (MMNQMGMMMQQQGV) has biased composition (low complexity). The tract at residues 1–54 (MMNQMGMMMQQQGVGVPGGPGGVGGVGMPGPGGVGVAPGMMQSPQMQQAQQQQV) is disordered. The segment covering 15–36 (GVPGGPGGVGGVGMPGPGGVGV) has biased composition (gly residues). Residues 37 to 54 (APGMMQSPQMQQAQQQQV) are compositionally biased toward low complexity.

The protein belongs to the Mediator complex subunit 29 family. Component of the Mediator complex.

The protein resides in the nucleus. Functionally, component of the Mediator complex, a coactivator involved in the regulated transcription of nearly all RNA polymerase II-dependent genes. Mediator functions as a bridge to convey information from gene-specific regulatory proteins to the basal RNA polymerase II transcription machinery. Mediator is recruited to promoters by direct interactions with regulatory proteins and serves as a scaffold for the assembly of a functional preinitiation complex with RNA polymerase II and the general transcription factors. The sequence is that of Mediator of RNA polymerase II transcription subunit 29 (ix) from Anopheles gambiae (African malaria mosquito).